The primary structure comprises 780 residues: Chloride channel protein CLC-b (780 aa).

Residues Met1–Asn28 form a disordered region. Transmembrane regions (helical) follow at residues Thr87–Val107, Gly130–Val150, Phe177–Leu197, Leu205–Arg225, Gly247–Leu267, Ala277–Ile297, Val327–Tyr347, Val370–Leu390, Met452–Ile472, Gly477–Met497, Ala509–Val529, and Ile530–Ile550. CBS domains are found at residues Ala594 to Glu663 and Thr708 to Leu770. The chain crosses the membrane as a helical span at residues His735 to Thr755.

This sequence belongs to the chloride channel (TC 2.A.49) family. As to quaternary structure, homodimer. Interacts with PP2A5. In terms of tissue distribution, broadly expressed in the plant.

It localises to the membrane. Its function is as follows. Voltage-gated chloride channel. This Arabidopsis thaliana (Mouse-ear cress) protein is Chloride channel protein CLC-b (CLC-B).